We begin with the raw amino-acid sequence, 171 residues long: UPF0312 protein SE_0264 (171 aa).

Belongs to the UPF0312 family.

In Staphylococcus epidermidis (strain ATCC 12228 / FDA PCI 1200), this protein is UPF0312 protein SE_0264.